We begin with the raw amino-acid sequence, 361 residues long: Phospho-N-acetylmuramoyl-pentapeptide-transferase (361 aa).

Helical transmembrane passes span 21 to 41, 73 to 93, 97 to 117, 134 to 154, 168 to 188, 200 to 220, 237 to 257, 264 to 284, 289 to 309, and 338 to 358; these read YITLRAVLATLTALTISFLVG, TMGGALILIAIVISTLLWADL, FVWVVLITTLGFGVIGWVDDW, YFWQSLIGAGVAAYLFHTATV, LVLPLGAVSFIVLTYFVIVGT, GLAIMPTVMVASALAVFAYVA, AGELTVFCAAIGGAGLGFLWF, VFMGDVGALALGAALGTVAVI, IVLFIMGGVFVMETISVMLQV, and QVVVRFWIITMMLVLVGLSTL.

Belongs to the glycosyltransferase 4 family. MraY subfamily. Mg(2+) is required as a cofactor.

The protein localises to the cell inner membrane. It carries out the reaction UDP-N-acetyl-alpha-D-muramoyl-L-alanyl-gamma-D-glutamyl-meso-2,6-diaminopimeloyl-D-alanyl-D-alanine + di-trans,octa-cis-undecaprenyl phosphate = di-trans,octa-cis-undecaprenyl diphospho-N-acetyl-alpha-D-muramoyl-L-alanyl-D-glutamyl-meso-2,6-diaminopimeloyl-D-alanyl-D-alanine + UMP. It participates in cell wall biogenesis; peptidoglycan biosynthesis. In terms of biological role, catalyzes the initial step of the lipid cycle reactions in the biosynthesis of the cell wall peptidoglycan: transfers peptidoglycan precursor phospho-MurNAc-pentapeptide from UDP-MurNAc-pentapeptide onto the lipid carrier undecaprenyl phosphate, yielding undecaprenyl-pyrophosphoryl-MurNAc-pentapeptide, known as lipid I. The chain is Phospho-N-acetylmuramoyl-pentapeptide-transferase from Methylobacillus flagellatus (strain ATCC 51484 / DSM 6875 / VKM B-1610 / KT).